Here is a 196-residue protein sequence, read N- to C-terminus: Ribonuclease HII (196 aa).

Residues 9 to 196 form the RNase H type-2 domain; it reads RLVAGVDEVG…KPVRRALGIE (188 aa). A divalent metal cation-binding residues include Asp15, Glu16, and Asp107.

Belongs to the RNase HII family. It depends on Mn(2+) as a cofactor. Mg(2+) is required as a cofactor.

The protein resides in the cytoplasm. It catalyses the reaction Endonucleolytic cleavage to 5'-phosphomonoester.. Endonuclease that specifically degrades the RNA of RNA-DNA hybrids. In Aeromonas hydrophila subsp. hydrophila (strain ATCC 7966 / DSM 30187 / BCRC 13018 / CCUG 14551 / JCM 1027 / KCTC 2358 / NCIMB 9240 / NCTC 8049), this protein is Ribonuclease HII.